The following is a 229-amino-acid chain: Lipoprotein-releasing system ATP-binding protein LolD 1 (229 aa).

An ABC transporter domain is found at 2 to 229; that stretch reads LVVSELSKSY…VRRGRFGITA (228 aa). Residue 38–45 participates in ATP binding; sequence GPSGSGKT.

This sequence belongs to the ABC transporter superfamily. Lipoprotein translocase (TC 3.A.1.125) family. In terms of assembly, the complex is composed of two ATP-binding proteins (LolD) and two transmembrane proteins (LolC and LolE).

It is found in the cell inner membrane. Part of the ABC transporter complex LolCDE involved in the translocation of mature outer membrane-directed lipoproteins, from the inner membrane to the periplasmic chaperone, LolA. Responsible for the formation of the LolA-lipoprotein complex in an ATP-dependent manner. The sequence is that of Lipoprotein-releasing system ATP-binding protein LolD 1 from Rhodopirellula baltica (strain DSM 10527 / NCIMB 13988 / SH1).